The chain runs to 63 residues: SPbeta prophage-derived uncharacterized protein YomP (63 aa).

This chain is SPbeta prophage-derived uncharacterized protein YomP (yomP), found in Bacillus subtilis (strain 168).